The following is a 614-amino-acid chain: UvrABC system protein C (614 aa).

Positions 14-91 (TSPGCYIHKD…IKENKPKYNI (78 aa)) constitute a GIY-YIG domain. The UVR domain maps to 196–231 (DKIIDDLKSKMAVAAQSMEFERAAEYRDLIQAIGTL). The tract at residues 595–614 (LSQVAEERVDYQTEGNHNEP) is disordered. Residues 599-614 (AEERVDYQTEGNHNEP) are compositionally biased toward basic and acidic residues.

It belongs to the UvrC family. Interacts with UvrB in an incision complex.

It localises to the cytoplasm. In terms of biological role, the UvrABC repair system catalyzes the recognition and processing of DNA lesions. UvrC both incises the 5' and 3' sides of the lesion. The N-terminal half is responsible for the 3' incision and the C-terminal half is responsible for the 5' incision. This is UvrABC system protein C from Streptococcus pneumoniae serotype 2 (strain D39 / NCTC 7466).